We begin with the raw amino-acid sequence, 585 residues long: Efflux pump dotC (585 aa).

The segment covering 1–34 (MSEDHTKADNLSEKDPHSPERSDSSSHEDAHARE) has biased composition (basic and acidic residues). The disordered stretch occupies residues 1–45 (MSEDHTKADNLSEKDPHSPERSDSSSHEDAHAREEEESSDDDGAL). Asn-10 carries an N-linked (GlcNAc...) asparagine glycan. A compositionally biased stretch (acidic residues) spans 35–44 (EEESSDDDGA). The chain crosses the membrane as a helical span at residues 51–71 (SLIAIVMIALSLIGLQLAVFL). Asn-91 is a glycosylation site (N-linked (GlcNAc...) asparagine). A run of 13 helical transmembrane segments spans residues 94 to 114 (AAYT…TPIW), 132 to 152 (ALFM…MLIT), 158 to 178 (GAAG…LFSL), 186 to 206 (GMIG…GGAF), 214 to 234 (WCFY…FFFL), 247 to 267 (FAAI…MFLF), 280 to 300 (SATV…FGLV), 323 to 343 (ALLV…YLPL), 353 to 373 (PILA…SAAA), 385 to 405 (LIPM…LINF), 414 to 434 (LIIY…APLV), 449 to 471 (TATF…QVLY), and 524 to 544 (SPMW…ILLV). Residues 564 to 585 (KKAEAERKAERQAKDLEKAQKS) form a disordered region.

It belongs to the major facilitator superfamily. TCR/Tet family.

Its subcellular location is the cell membrane. The protein localises to the vacuole membrane. Functionally, efflux pump; part of the gene cluster that mediates the biosynthesis of dothistromin (DOTH), a polyketide toxin very similar in structure to the aflatoxin precursor, versicolorin B. One function of dotC may be to transport early-stage dothistromin biosynthetic intermediates from the cytoplasm into vacuoles, thereby affecting the rate of dothistromin production. This is Efflux pump dotC from Dothistroma septosporum (Red band needle blight fungus).